A 523-amino-acid chain; its full sequence is MAAHRRWLLMSFLFLEVILLEAAKILTISTLSASHYIVISRVSQVLHEGGHNVTKLLYESANIPDFRKEKPSYQVINWRPPEDQEKKFADLRHRLTEEITYGRSKHHTLLKIHQYFGDLCSQLLSRKDIMDFLKNENFDLVLLDSMDLCSLLIVEKLGKRFVSFLPFQFSYMDFGLPSAPLSYAPVYGSGLTDQMDFWGRVKNFLMFLDFSMKQREILSQYDSTIQEHFVEGSQPVLSDLLLKAELWFVNSDFALDFARPLFPNTVYVGGLLDKPVQPIPQDLENFISQFGDSGFVLVALGSIVSMIQSKEIIKEMNSAFAHLPQGVLWTCKTSHWPKDVSLAPNVKIMDWLPQTDLLAHPSIRLFVTHGGMNSVMEAVHHGVPMVGIPFFFDQPENMVRVEAKNLGVSIQLQTLKAESFALTMKKIIEDKRYKSAAMASKIIRHSHPLTPAQRLLGWIDHILQTGGAAHLKPYAFQQPWHEQYMLDVFLFLLGLMLGTLWLSVKVLVAVTRYLSIATKVKEA.

The first 22 residues, 1-22 (MAAHRRWLLMSFLFLEVILLEA), serve as a signal peptide directing secretion. The Extracellular portion of the chain corresponds to 23–487 (AKILTISTLS…QPWHEQYMLD (465 aa)). An N-linked (GlcNAc...) asparagine glycan is attached at N52. Residues 488–508 (VFLFLLGLMLGTLWLSVKVLV) form a helical membrane-spanning segment. The Cytoplasmic portion of the chain corresponds to 509–523 (AVTRYLSIATKVKEA).

Belongs to the UDP-glycosyltransferase family. Highly expressed in kidney, while it is expressed at low levels in liver. Not detected in other tissues examined.

It localises to the membrane. It catalyses the reaction glucuronate acceptor + UDP-alpha-D-glucuronate = acceptor beta-D-glucuronoside + UDP + H(+). UDP-glucuronosyltransferases catalyze phase II biotransformation reactions in which lipophilic substrates are conjugated with glucuronic acid to increase water solubility and enhance excretion. They are of major importance in the conjugation and subsequent elimination of potentially toxic xenobiotics and endogenous compounds. This Mus musculus (Mouse) protein is UDP-glucuronosyltransferase 3A2 (Ugt3a2).